The following is a 916-amino-acid chain: Protein O-GlcNAcase (916 aa).

A disordered region spans residues 1–46; sequence MVQKESQAALEERESERNANPAAASGASLEQSVAPAPGEDNPSGAG. Residues 60–336 form the GH84 domain; sequence FLCGVVEGFY…TLATWYKSNM (277 aa). The a protein site is built by Gly67, Lys98, and Asp174. Asp175 (proton donor) is an active-site residue. Residues Tyr219, 278-280, Asp285, and Asn313 contribute to the a protein site; that span reads WDN. Residue Ser364 is modified to Phosphoserine. A disordered region spans residues 443–465; it reads ALSGEPSVLTKEEEKKQPDEEPM. The segment covering 452 to 461 has biased composition (basic and acidic residues); it reads TKEEEKKQPD.

Belongs to the glycosyl hydrolase 84 family. Monomer. Interacts with CLOCK. In terms of processing, proteolytically cleaved by caspase-3 during apoptosis. The fragments interact with each other; cleavage does not decrease enzyme activity.

It localises to the cytoplasm. The protein resides in the nucleus. It carries out the reaction 3-O-(N-acetyl-beta-D-glucosaminyl)-L-seryl-[protein] + H2O = N-acetyl-D-glucosamine + L-seryl-[protein]. The catalysed reaction is 3-O-(N-acetyl-beta-D-glucosaminyl)-L-threonyl-[protein] + H2O = L-threonyl-[protein] + N-acetyl-D-glucosamine. Functionally, cleaves GlcNAc but not GalNAc from O-glycosylated proteins. Deglycosylates a large and diverse number of proteins, such as CRYAB, ELK1, GSDMD, LMNB1 and TAB1. Can use p-nitrophenyl-beta-GlcNAc and 4-methylumbelliferone-GlcNAc as substrates but not p-nitrophenyl-beta-GalNAc or p-nitrophenyl-alpha-GlcNAc (in vitro). Does not bind acetyl-CoA and does not have histone acetyltransferase activity. The chain is Protein O-GlcNAcase from Mus musculus (Mouse).